A 142-amino-acid chain; its full sequence is Deoxyuridine 5'-triphosphate nucleotidohydrolase (142 aa).

The protein belongs to the dUTPase family. Requires Mg(2+) as cofactor.

It catalyses the reaction dUTP + H2O = dUMP + diphosphate + H(+). Functionally, this enzyme is involved in nucleotide metabolism: it produces dUMP, the immediate precursor of thymidine nucleotides and it decreases the intracellular concentration of dUTP so that uracil cannot be incorporated into DNA. This Swinepox virus (strain Kasza) (SWPV) protein is Deoxyuridine 5'-triphosphate nucleotidohydrolase (DUT).